The following is a 325-amino-acid chain: Chain length determinant protein (325 aa).

Residues 1–31 (MRVENNNVSGQNHDPEQIDLIDLLVQLWRGK) lie on the Cytoplasmic side of the membrane. The chain crosses the membrane as a helical span at residues 32–52 (MTIIISVIVAIALAIGYLAVA). The Periplasmic portion of the chain corresponds to 53-294 (KEKWTSTAII…LPIRRDSPKK (242 aa)). A helical transmembrane segment spans residues 295-315 (AITLILAVLLGGMVGAGIVLG). At 316–325 (RNALRNYNAK) the chain is on the cytoplasmic side.

This sequence belongs to the WzzB/Cld/Rol family.

It is found in the cell inner membrane. The protein operates within bacterial outer membrane biogenesis; lipopolysaccharide biosynthesis. In terms of biological role, confers a modal distribution of chain length on the O-antigen component of lipopolysaccharide (LPS). Gives rise to a reduced number of short chain molecules and increases in numbers of longer molecules. The polypeptide is Chain length determinant protein (wzzB) (Shigella flexneri).